We begin with the raw amino-acid sequence, 783 residues long: Probable phosphoketolase (783 aa).

This sequence belongs to the XFP family. Requires thiamine diphosphate as cofactor.

In Rhodopseudomonas palustris (strain ATCC BAA-98 / CGA009), this protein is Probable phosphoketolase.